Here is a 321-residue protein sequence, read N- to C-terminus: Ribosomal RNA small subunit methyltransferase H (321 aa).

Residues 44 to 46, Asp64, Phe88, Asp109, and Gln116 contribute to the S-adenosyl-L-methionine site; that span reads GGH.

This sequence belongs to the methyltransferase superfamily. RsmH family.

The protein localises to the cytoplasm. The enzyme catalyses cytidine(1402) in 16S rRNA + S-adenosyl-L-methionine = N(4)-methylcytidine(1402) in 16S rRNA + S-adenosyl-L-homocysteine + H(+). Its function is as follows. Specifically methylates the N4 position of cytidine in position 1402 (C1402) of 16S rRNA. The polypeptide is Ribosomal RNA small subunit methyltransferase H (Methylobacillus flagellatus (strain ATCC 51484 / DSM 6875 / VKM B-1610 / KT)).